The primary structure comprises 262 residues: Caffeyl-CoA reductase-Etf complex subunit CarD (262 aa).

It belongs to the ETF beta-subunit/FixA family. Part of the homotrimeric caffeyl-CoA reductase-Etf complex composed of (R)-2-hydroxyisocaproyl-CoA dehydratase CarC, and the electron transfer flavoprotein (ETF) alpha (CarE) and beta (CarD) subunits. The cofactor is FAD. Requires AMP as cofactor.

The protein localises to the cytoplasm. The enzyme catalyses hydrocaffeoyl-CoA + 2 reduced [2Fe-2S]-[ferredoxin] + 2 NAD(+) = (E)-caffeoyl-CoA + 2 oxidized [2Fe-2S]-[ferredoxin] + 2 NADH. Functionally, caffeyl-CoA reductase-Etf complex catalyzes the reduction of caffeyl-CoA to yield hydrocaffeyl-CoA. It couples the endergonic ferredoxin reduction with NADH as reductant to the exergonic reduction of caffeoyl-CoA with the same reductant. It uses the mechanism of electron bifurcation to overcome the steep energy barrier in ferredoxin reduction. The electron transfer flavoprotein (Etf) mediates the electron transfer between the different donors and acceptors. The complex can also reduce 4-coumaroyl-CoA and feruloyl-CoA. The chain is Caffeyl-CoA reductase-Etf complex subunit CarD from Acetobacterium woodii (strain ATCC 29683 / DSM 1030 / JCM 2381 / KCTC 1655 / WB1).